Reading from the N-terminus, the 623-residue chain is Pyranose 2-oxidase (623 aa).

The signal sequence occupies residues 1–28 (MSTSSSDPFFNFAKSSFRSAAAQKASAS). The propeptide occupies 29-38 (SLPPLPGPDK). The residue at position 167 (His167) is a Tele-8alpha-FAD histidine. 2 residues coordinate substrate: Gln448 and His450. His548 (proton acceptor) is an active-site residue. Asn593 is an active-site residue.

This sequence belongs to the GMC oxidoreductase family. As to quaternary structure, homotetramer. FAD is required as a cofactor.

The protein resides in the periplasm. The catalysed reaction is D-glucose + O2 = 2-dehydro-D-glucose + H2O2. Functionally, catalyzes the oxidation of various aldopyranoses and disaccharides on carbon-2 to the corresponding 2-keto sugars concomitant with the reduction of O(2) to H(2)O(2). Plays an important role in lignin degradation of wood rot fungi by supplying the essential cosubstrate H(2)O(2) for the ligninolytic peroxidases, lignin peroxidase and manganese-dependent peroxidase. The polypeptide is Pyranose 2-oxidase (p2ox) (Peniophora sp. (strain SG) (White-rot fungus)).